The following is a 115-amino-acid chain: Large ribosomal subunit protein bL20 (115 aa).

The protein belongs to the bacterial ribosomal protein bL20 family.

Functionally, binds directly to 23S ribosomal RNA and is necessary for the in vitro assembly process of the 50S ribosomal subunit. It is not involved in the protein synthesizing functions of that subunit. This chain is Large ribosomal subunit protein bL20, found in Borrelia duttonii (strain Ly).